A 341-amino-acid polypeptide reads, in one-letter code: uncharacterized protein (341 aa).

58-82 (ITGGSSGIGAAAAKKIAEAGGTVVL) serves as a coordination point for NADP(+). Ser194 is a substrate binding site. Catalysis depends on Tyr207, which acts as the Proton acceptor. Residues 309 to 329 (DSSAAKGSESQTDTSELDKRS) form a disordered region.

It belongs to the short-chain dehydrogenases/reductases (SDR) family.

This is an uncharacterized protein from Mycobacterium bovis (strain ATCC BAA-935 / AF2122/97).